Here is a 382-residue protein sequence, read N- to C-terminus: Chorismate synthase (382 aa).

Residues Arg39 and Arg45 each contribute to the NADP(+) site. Residues 127–129 (RAS), 245–246 (QA), Gly290, 305–309 (KPIPT), and Arg331 contribute to the FMN site.

The protein belongs to the chorismate synthase family. In terms of assembly, homotetramer. Requires FMNH2 as cofactor.

The enzyme catalyses 5-O-(1-carboxyvinyl)-3-phosphoshikimate = chorismate + phosphate. It participates in metabolic intermediate biosynthesis; chorismate biosynthesis; chorismate from D-erythrose 4-phosphate and phosphoenolpyruvate: step 7/7. Catalyzes the anti-1,4-elimination of the C-3 phosphate and the C-6 proR hydrogen from 5-enolpyruvylshikimate-3-phosphate (EPSP) to yield chorismate, which is the branch point compound that serves as the starting substrate for the three terminal pathways of aromatic amino acid biosynthesis. This reaction introduces a second double bond into the aromatic ring system. The sequence is that of Chorismate synthase from Desulfitobacterium hafniense (strain DSM 10664 / DCB-2).